The primary structure comprises 602 residues: Arginine--tRNA ligase (602 aa).

The 'HIGH' region motif lies at 138 to 148 (ANPTGPMHVGH).

It belongs to the class-I aminoacyl-tRNA synthetase family. As to quaternary structure, monomer.

The protein localises to the cytoplasm. It carries out the reaction tRNA(Arg) + L-arginine + ATP = L-arginyl-tRNA(Arg) + AMP + diphosphate. The polypeptide is Arginine--tRNA ligase (Gluconobacter oxydans (strain 621H) (Gluconobacter suboxydans)).